Consider the following 301-residue polypeptide: Mitochondrial thiamine pyrophosphate carrier 1 (301 aa).

Solcar repeat units lie at residues 15-102, 115-200, and 206-293; these read VTPT…ISKS, SSAN…AREL, and RVPF…SLSF. The next 6 helical transmembrane spans lie at 20 to 38, 79 to 99, 121 to 141, 172 to 192, 207 to 227, and 252 to 272; these read ALVA…TAPL, VPAE…YSII, LIVG…FDLL, IYAG…LMFW, VPFI…GITF, and IFVT…FGIS.

This sequence belongs to the mitochondrial carrier (TC 2.A.29) family.

It is found in the mitochondrion inner membrane. Mitochondrial transporter that mediates uptake of thiamine pyrophosphate (ThPP) into mitochondria. The chain is Mitochondrial thiamine pyrophosphate carrier 1 (TPC1) from Candida albicans (strain SC5314 / ATCC MYA-2876) (Yeast).